Reading from the N-terminus, the 216-residue chain is DNA gyrase subunit B (216 aa).

The Toprim domain occupies 140–216; that stretch reads SELYLVEGDS…PDKLRYHKII (77 aa).

Belongs to the type II topoisomerase GyrB family. As to quaternary structure, heterotetramer, composed of two GyrA and two GyrB chains. In the heterotetramer, GyrA contains the active site tyrosine that forms a transient covalent intermediate with DNA, while GyrB binds cofactors and catalyzes ATP hydrolysis.

It localises to the cytoplasm. It catalyses the reaction ATP-dependent breakage, passage and rejoining of double-stranded DNA.. Its function is as follows. A type II topoisomerase that negatively supercoils closed circular double-stranded (ds) DNA in an ATP-dependent manner to modulate DNA topology and maintain chromosomes in an underwound state. Negative supercoiling favors strand separation, and DNA replication, transcription, recombination and repair, all of which involve strand separation. Also able to catalyze the interconversion of other topological isomers of dsDNA rings, including catenanes and knotted rings. Type II topoisomerases break and join 2 DNA strands simultaneously in an ATP-dependent manner. This chain is DNA gyrase subunit B (gyrB), found in Acinetobacter bereziniae (Acinetobacter genomosp. 10).